We begin with the raw amino-acid sequence, 141 residues long: Decarboxylase CPUR_05434 (141 aa).

An EthD domain is found at 26–121; sequence EGMSEEAYRN…MHDHEMFADT (96 aa).

This sequence belongs to the tpcK family.

The catalysed reaction is atrochrysone carboxylate + H(+) = atrochrysone + CO2. Decarboxylase; part of the ergochrome gene cluster responsible for the typical purple-black color of the ergot sclerotia. The ergochrome gene cluster produces several ergot pigments including the yellow ergochrome secalonic acid and its derivatives, as well as the red anthraquinones endocrocin and clavorubin. The pathway begins with the synthesis of atrochrysone thioester by the polyketide synthase (PKS) CPUR_05437. The atrochrysone carboxyl ACP thioesterase CPUR_05436 then breaks the thioester bond and releases the atrochrysone carboxylic acid from CPUR_05437. The decarboxylase CPUR_05434 then catalyzes the concerted decarboxylation-elimination required to convert atochrysone carboxylic acid into emodin anthrone, which is further oxidized to emodin by the anthrone oxygenase CPUR_05435. Emodin is further modified to yield monodictyphenone via several steps involving CPUR_05427, CPUR_05428, CPUR_05429 and CPUR_05430. The short chain dehydrogenase/reductase CPUR_05418 then catalyzes the C-5 ketoreduction to give the xanthone skeleton of the monomeric units. Ergochromes formation requires further dimerization steps of different xanthone units, probably catalyzed by the cytochrome P450 monooxygenase CPUR_05419. CPUR_05425, CPUR_05426 and CPUR_05431 are unique to Claviceps, thus it is likely that they are involved in further modification of xanthone units or in their dimerization. The yellow ergochromes and the red anthraquinone pigments endocrocin and clavorubin are products from the same PKS derived precursors and the latter are likely shunt products in the pathway of xanthone biosynthesis. It is proposed that atrochrysone carboxylic acid released from the PKS CPUR_05437 can also be converted to endocrocin anthrone which is further oxidized into endocrocin by CPUR_05435. Endocrocin could be then modified to clavorubin, possibly by CPUR_05423 and CPUR_05431. Clavorubin is the principal anthraquinone metabolite produced by the cluster with a much higher yield compared to endocrocin. In Claviceps purpurea (strain 20.1) (Ergot fungus), this protein is Decarboxylase CPUR_05434.